The sequence spans 297 residues: Protein LRATD1 (297 aa).

Residue Ser38 is modified to Phosphoserine. The 96-residue stretch at 138–233 (PAPEPPAPAP…CRFGKREFKA (96 aa)) folds into the LRAT domain.

It belongs to the LRATD family.

The protein localises to the cytoplasm. Its function is as follows. May play a role in cell morphology and motility. The polypeptide is Protein LRATD1 (LRATD1) (Bos taurus (Bovine)).